Here is a 60-residue protein sequence, read N- to C-terminus: Large ribosomal subunit protein uL30 (60 aa).

It belongs to the universal ribosomal protein uL30 family. Part of the 50S ribosomal subunit.

In Salinispora tropica (strain ATCC BAA-916 / DSM 44818 / JCM 13857 / NBRC 105044 / CNB-440), this protein is Large ribosomal subunit protein uL30.